The primary structure comprises 80 residues: Defensin-like protein 46 (80 aa).

The first 27 residues, 1–27 (MGSTKTLVTCFLTIILAVSLSNHNVLA), serve as a signal peptide directing secretion. Intrachain disulfides connect Cys40-Cys78, Cys44-Cys65, Cys50-Cys76, and Cys54-Cys77.

Belongs to the DEFL family.

It localises to the secreted. This chain is Defensin-like protein 46, found in Arabidopsis thaliana (Mouse-ear cress).